Consider the following 217-residue polypeptide: MSSKPSDILDEVTLYAHYGLSVAKKLGMNMVDAFRAAFSVNDDIRQVYYRDKGISHAKAGRYSQAVMLLEQVYDADAFDVDVALHLGIAYVKTGAVDRGTELLERSLADAPDNVKVATVLGLTYVQVQKYDLAVPLLIKVAEANPINFNVRFRLGVALDNLGRFDEAIDSFKIALGLRPNEGKVHRAIAFSYEQMGRHEEALPHFKKANELDEGASV.

TPR repeat units lie at residues 12–44 (VTLYAHYGLSVAKKLGMNMVDAFRAAFSVNDDI), 46–79 (QVYYRDKGISHAKAGRYSQAVMLLEQVYDADAFD), 80–113 (VDVALHLGIAYVKTGAVDRGTELLERSLADAPDN), 114–147 (VKVATVLGLTYVQVQKYDLAVPLLIKVAEANPIN), 148–181 (FNVRFRLGVALDNLGRFDEAIDSFKIALGLRPNE), and 182–215 (GKVHRAIAFSYEQMGRHEEALPHFKKANELDEGA). Positions 41–112 (NDDIRQVYYR…LERSLADAPD (72 aa)) are N-terminal domain (NTD). The interval 113–217 (NVKVATVLGL…ANELDEGASV (105 aa)) is C-terminal domain (CTD).

The protein belongs to the magnetosome MamA family. As to quaternary structure, oligomerizes into high molecular weight complexes (at least 560 kDa). Forms round, 20 nm diameter complexes with a central cavity. Interacts with full-length Mms6. Probably binds MamC.

The protein resides in the magnetosome membrane. In terms of biological role, probably forms a large homooligomer on which other magnetosome subunits assemble. Required for formation of functional magnetosomes from pre-existing vesicles, it has a dynamic location in the cell. The sequence is that of Magnetosome protein MamA from Paramagnetospirillum magneticum (strain ATCC 700264 / AMB-1) (Magnetospirillum magneticum).